The sequence spans 2313 residues: MKRKNKVLSILLTLLLIISTTSVNMSFAEATPSIEMVLDKTEVHVGDVITATIKVNNIRKLAGYQLNIKFDPEVLQPVDPATGEEFTDKSMPVNRVLLTNSKYGPTPVAGNDIKSGIINFATGYNNLTAYKSSGIDEHTGIIGEIGFKVLKKQNTSIRFEDTLSMPGAISGTSLFDWDAETITGYEVIQPDLIVVEAEPLKDASVALELDKTKVKVGDIITATIKIENMKNFAGYQLNIKYDPTMLEAIELETGSAIAKRTWPVTGGTVLQSDNYGKTTAVANDVGAGIINFAEAYSNLTKYRETGVAEETGIIGKIGFRVLKAGSTAIRFEDTTAMPGAIEGTYMFDWYGENIKGYSVVQPGEIVVEGEEPGEEPTEEPVPTETSVDPTPTVTEEPVPSELPDSYVIMELDKTKVKVGDIITATIKIENMKNFAGYQLNIKYDPTMLEAIELETGSAIAKRTWPVTGGTVLQSDNYGKTTAVANDVGAGIINFAEAYSNLTKYRETGVAEETGIIGKIGFRVLKAGSTAIRFEDTTAMPGAIEGTYMFDWYGENIKGYSVVQPGEIVVEGEEPGEEPTEEPVPTETSVDPTPTVTEEPVPSELPDSYVIMELDKTKVKVGDIITATIKIENMKNFAGYQLNIKYDPTMLEAIELETGSAIAKRTWPVTGGTVLQSDNYGKTTAVANDVGAGIINFAEAYSNLTKYRETGVAEETGIIGKIGFRVLKAGSTAIRFEDTTAMPGAIEGTYMFDWYGENIKGYSVVQPGEIVAEGEEPGEEPTEEPVPTETSADPTPTVTEEPVPSELPDSYVIMELDKTKVKVGDIITATIKIENMKNFAGYQLNIKYDPTMLEAIELETGSAIAKRTWPVTGGTVLQSDNYGKTTAVANDVGAGIINFAEAYSNLTKYRETGVAEETGIIGKIGFRVLKAGSTAIRFEDTTAMPGAIEGTYMFDWYGENIKGYSVVQPGEIVAEGEEPGEEPTEEPVPTETPVDPTPTVTEEPVPSELPDSYVIMELDKTKVKVGDIITATIKIENMKNFAGYQLNIKYDPTMLEAIELETGSAIAKRTWPVTGGTVLQSDNYGKTTAVANDVGAGIINFAEAYSNLTKYRETGVAEETGIIGKIGFRVLKAGSTAIRFEDTTAMPGAIEGTYMFDWYGENIKGYSVVQPGEIVAEGEEPTEEPVPTETPVDPTPTVTEEPVPSELPDSYVIMELDKTKVKEGDVIIATIRVNNIKNLAGYQIGIKYDPKVLEAFNIETGDPIDEGTWPAVGGTILKNRDYLPTGVAINNVSKGILNFAAYYVYFDDYREEGKSEDTGIIGNIGFRVLKAEDTTIRFEELESMPGSIDGTYMLDWYLNRISGYVVIQPAPIKAASDEPIPTDTPSDEPTPSDEPTPSDEPTPSDEPTPSDEPTPSETPEEPIPTDTPSDEPTPSDEPTPSDEPTPSDEPTPSDEPTPSETPEEPIPTDTPSDEPTPSDEPTPSDEPTPSDEPTPSDEPTPSETPEEPIPTDTPSDEPTPSDEPTPSDEPTPSDEPTPSDEPTPSETPEEPIPTDTPSDEPTPSDEPTPSDEPTPSDEPTPSDEPTPSDEPTPSDEPTPSETPEEPIPTDTPSDEPTPSDEPTPSDEPTPSDEPTPSDEPTPSDEPTPSDEPTPSETPEEPIPTDTPSDEPTPSDEPTPSDEPTPSDEPTPSDEPTPSETPEEPIPTDTPSDEPTPSDEPTPSDEPTPSDEPTPSDEPTPSETPEEPIPTDTPSDEPTPSDEPTPSDEPTPSDEPTPSDEPTPSETPEEPIPTDTPSDEPTPSDEPTPSDEPTPSDEPTPSDEPTPSETPEEPIPTDTPSDEPTPSDEPTPSDEPTPSDEPTPSDEPTPSETPEEPIPTDTPSDEPTPSDEPTPSDEPTPSDEPTPSDEPTPSETPEEPIPTDTPSDEPTPSDEPTPSDEPTPSDEPTPSDEPTPSDEPTPSDEPTPSETPEEPIPTDTPSDEPTPSDEPTPSDEPTPSDEPTPSDEPTPSDEPTPSDEPTPSETPEEPTPTTTPTPTPSTTPTSGSGGSGGSGGGGGGGGGTVPTSPTPTPTSKPTSTPAPTEIEEPTPSDVPGAIGGEHRAYLRGYPDGSFRPERNITRAEAAVIFAKLLGADESYGAQSASPYSDLADTHWAAWAIKFATSQGLFKGYPDGTFKPDQNITRAEFATVVLHFLTKVKGQEIMSKLATIDISNPKFDDCVGHWAQEFIEKLTSLGYISGYPDGTFKPQNYIKRSESVALINRALERGPLNGAPKLFPDVNESYWAFGDIMDGALDHSYIIEDEKEKFVKLLED.

Positions 1-28 (MKRKNKVLSILLTLLLIISTTSVNMSFA) are cleaved as a signal peptide. Cohesin domains lie at 34-197 (IEMV…VVEA) and 205-367 (VALE…EIVV). Over residues 369-378 (GEEPGEEPTE) the composition is skewed to acidic residues. The disordered stretch occupies residues 369-400 (GEEPGEEPTEEPVPTETSVDPTPTVTEEPVPS). A compositionally biased stretch (low complexity) spans 380 to 400 (PVPTETSVDPTPTVTEEPVPS). The Cohesin 3 domain occupies 407-569 (VIMELDKTKV…SVVQPGEIVV (163 aa)). Residues 571 to 580 (GEEPGEEPTE) are compositionally biased toward acidic residues. The tract at residues 571 to 602 (GEEPGEEPTEEPVPTETSVDPTPTVTEEPVPS) is disordered. A compositionally biased stretch (low complexity) spans 582 to 602 (PVPTETSVDPTPTVTEEPVPS). The Cohesin 4 domain maps to 609–771 (VIMELDKTKV…SVVQPGEIVA (163 aa)). Residues 772 to 782 (EGEEPGEEPTE) show a composition bias toward acidic residues. Positions 772–805 (EGEEPGEEPTEEPVPTETSADPTPTVTEEPVPSE) are disordered. Low complexity predominate over residues 784-803 (PVPTETSADPTPTVTEEPVP). The region spanning 811–973 (VIMELDKTKV…SVVQPGEIVA (163 aa)) is the Cohesin 5 domain. A compositionally biased stretch (acidic residues) spans 974–984 (EGEEPGEEPTE). Positions 974–1007 (EGEEPGEEPTEEPVPTETPVDPTPTVTEEPVPSE) are disordered. Residues 986 to 1007 (PVPTETPVDPTPTVTEEPVPSE) are compositionally biased toward low complexity. The 163-residue stretch at 1013 to 1175 (VIMELDKTKV…SVVQPGEIVA (163 aa)) folds into the Cohesin 6 domain. Disordered regions lie at residues 1177–1203 (GEEPTEEPVPTETPVDPTPTVTEEPVP) and 1374–2111 (ASDE…PDGS). Residues 1184 to 1203 (PVPTETPVDPTPTVTEEPVP) show a composition bias toward low complexity. Residues 1211–1375 (VIMELDKTKV…IQPAPIKAAS (165 aa)) form the Cohesin 7 domain. Low complexity predominate over residues 1376–1390 (DEPIPTDTPSDEPTP). Residues 1383–2025 (TPSDEPTPSD…SDEPTPSETP (643 aa)) are approximate tandem repeats of T-P-S-D-E-P. Pro residues predominate over residues 1391–1411 (SDEPTPSDEPTPSDEPTPSDE). Positions 1423 to 1433 (PTDTPSDEPTP) are enriched in low complexity. Residues 1434-1454 (SDEPTPSDEPTPSDEPTPSDE) show a composition bias toward pro residues. Over residues 1466-1476 (PTDTPSDEPTP) the composition is skewed to low complexity. Residues 1477–1497 (SDEPTPSDEPTPSDEPTPSDE) show a composition bias toward pro residues. A compositionally biased stretch (low complexity) spans 1509–1519 (PTDTPSDEPTP). Positions 1520–1540 (SDEPTPSDEPTPSDEPTPSDE) are enriched in pro residues. The segment covering 1552-1562 (PTDTPSDEPTP) has biased composition (low complexity). Over residues 1563–1595 (SDEPTPSDEPTPSDEPTPSDEPTPSDEPTPSDE) the composition is skewed to pro residues. A compositionally biased stretch (low complexity) spans 1607–1617 (PTDTPSDEPTP). Over residues 1618-1650 (SDEPTPSDEPTPSDEPTPSDEPTPSDEPTPSDE) the composition is skewed to pro residues. Low complexity predominate over residues 1662–1672 (PTDTPSDEPTP). A compositionally biased stretch (pro residues) spans 1673 to 1693 (SDEPTPSDEPTPSDEPTPSDE). Residues 1705–1715 (PTDTPSDEPTP) are compositionally biased toward low complexity. Over residues 1716–1736 (SDEPTPSDEPTPSDEPTPSDE) the composition is skewed to pro residues. The span at 1748 to 1758 (PTDTPSDEPTP) shows a compositional bias: low complexity. Pro residues predominate over residues 1759–1779 (SDEPTPSDEPTPSDEPTPSDE). The segment covering 1791–1801 (PTDTPSDEPTP) has biased composition (low complexity). Residues 1802–1822 (SDEPTPSDEPTPSDEPTPSDE) are compositionally biased toward pro residues. A compositionally biased stretch (low complexity) spans 1834 to 1844 (PTDTPSDEPTP). Residues 1845 to 1865 (SDEPTPSDEPTPSDEPTPSDE) show a composition bias toward pro residues. Residues 1877–1887 (PTDTPSDEPTP) show a composition bias toward low complexity. A compositionally biased stretch (pro residues) spans 1888–1908 (SDEPTPSDEPTPSDEPTPSDE). Low complexity predominate over residues 1920 to 1930 (PTDTPSDEPTP). The segment covering 1931–1963 (SDEPTPSDEPTPSDEPTPSDEPTPSDEPTPSDE) has biased composition (pro residues). Residues 1975 to 1985 (PTDTPSDEPTP) show a composition bias toward low complexity. 2 stretches are compositionally biased toward pro residues: residues 1986 to 2018 (SDEPTPSDEPTPSDEPTPSDEPTPSDEPTPSDE) and 2027 to 2039 (EPTPTTTPTPTPS). Residues 2045 to 2062 (GSGGSGGSGGGGGGGGGT) show a composition bias toward gly residues. SLH domains follow at residues 2067–2140 (PTPT…YGAQ), 2141–2204 (SASP…EIMS), and 2211–2274 (ISNP…GAPK). The segment covering 2073 to 2082 (SKPTSTPAPT) has biased composition (low complexity).

In terms of assembly, assembled into mono-layered crystalline arrays.

The protein resides in the secreted. It is found in the cell wall. It localises to the S-layer. This is Cell surface glycoprotein 1 (olpB) from Acetivibrio thermocellus (strain ATCC 27405 / DSM 1237 / JCM 9322 / NBRC 103400 / NCIMB 10682 / NRRL B-4536 / VPI 7372) (Clostridium thermocellum).